Here is a 102-residue protein sequence, read N- to C-terminus: NADH-quinone oxidoreductase subunit K 2 (102 aa).

3 consecutive transmembrane segments (helical) span residues 4–24, 30–50, and 62–82; these read ITPVHYLALSAALLLIGTVGV, IVIILMSIELILNAVNINLIA, and IFAIFVITDAVAEAAVGLGIL.

It belongs to the complex I subunit 4L family. NDH-1 is composed of 14 different subunits. Subunits NuoA, H, J, K, L, M, N constitute the membrane sector of the complex.

It localises to the cell inner membrane. It catalyses the reaction a quinone + NADH + 5 H(+)(in) = a quinol + NAD(+) + 4 H(+)(out). Functionally, NDH-1 shuttles electrons from NADH, via FMN and iron-sulfur (Fe-S) centers, to quinones in the respiratory chain. The immediate electron acceptor for the enzyme in this species is believed to be ubiquinone. Couples the redox reaction to proton translocation (for every two electrons transferred, four hydrogen ions are translocated across the cytoplasmic membrane), and thus conserves the redox energy in a proton gradient. The protein is NADH-quinone oxidoreductase subunit K 2 of Solibacter usitatus (strain Ellin6076).